The chain runs to 383 residues: Probable disease resistance protein At4g19060 (383 aa).

The disordered stretch occupies residues 36-84 (YEKWSSGKQRGSSSKHGNQSTHGDSSPTRNSSGSSKKGRPKANRVETSS). Polar residues predominate over residues 41–70 (SGKQRGSSSKHGNQSTHGDSSPTRNSSGSS). NB-ARC domains lie at 75-184 (PKAN…MFKH) and 207-281 (VKEK…LAKA). 121–128 (GKYGVGKT) is an ATP binding site.

Its function is as follows. Possible disease resistance protein. This chain is Probable disease resistance protein At4g19060, found in Arabidopsis thaliana (Mouse-ear cress).